The following is a 295-amino-acid chain: Pyridoxal 5'-phosphate synthase subunit PdxS (295 aa).

Residue Asp-25 coordinates D-ribose 5-phosphate. The active-site Schiff-base intermediate with D-ribose 5-phosphate is Lys-82. Gly-154 provides a ligand contact to D-ribose 5-phosphate. Position 166 (Arg-166) interacts with D-glyceraldehyde 3-phosphate. D-ribose 5-phosphate-binding positions include Gly-215 and 236 to 237; that span reads GS.

The protein belongs to the PdxS/SNZ family. In the presence of PdxT, forms a dodecamer of heterodimers.

It catalyses the reaction aldehydo-D-ribose 5-phosphate + D-glyceraldehyde 3-phosphate + L-glutamine = pyridoxal 5'-phosphate + L-glutamate + phosphate + 3 H2O + H(+). It functions in the pathway cofactor biosynthesis; pyridoxal 5'-phosphate biosynthesis. In terms of biological role, catalyzes the formation of pyridoxal 5'-phosphate from ribose 5-phosphate (RBP), glyceraldehyde 3-phosphate (G3P) and ammonia. The ammonia is provided by the PdxT subunit. Can also use ribulose 5-phosphate and dihydroxyacetone phosphate as substrates, resulting from enzyme-catalyzed isomerization of RBP and G3P, respectively. The protein is Pyridoxal 5'-phosphate synthase subunit PdxS of Haemophilus ducreyi (strain 35000HP / ATCC 700724).